We begin with the raw amino-acid sequence, 279 residues long: MMTAETTGRAACLIGWPAAHSRSPLIHHYWLRLHGITGGYSIEAIPPEGFAEFVMHLSTHGFAGANVTIPHKERALQLTEPDDRARAVGAANTLYYEGAVLRSTNTDVEGFISNLDVAAPSWDRTGDALVLGAGGASRAVVFGLVERGIGRIHLANRTVERARVLADQFGATVIPAAWNTLGDLLPRVGLLVNTTSLGMKGQPPLDIELALLPRDAVVADLVYVPLETPLLSAARARGLRTADGLGMLLHQAVRGFELWFGLRPAVTQELRALVEADLL.

Shikimate contacts are provided by residues 21 to 23 (SRS) and Thr68. Lys72 functions as the Proton acceptor in the catalytic mechanism. NADP(+) is bound at residue Asp83. Shikimate is bound by residues Asn92 and Asp107. Residues 132 to 136 (GAGGA), 156 to 161 (NRTVER), and Leu221 contribute to the NADP(+) site. Tyr223 provides a ligand contact to shikimate. Gly244 contacts NADP(+).

Belongs to the shikimate dehydrogenase family. As to quaternary structure, homodimer.

The enzyme catalyses shikimate + NADP(+) = 3-dehydroshikimate + NADPH + H(+). The protein operates within metabolic intermediate biosynthesis; chorismate biosynthesis; chorismate from D-erythrose 4-phosphate and phosphoenolpyruvate: step 4/7. In terms of biological role, involved in the biosynthesis of the chorismate, which leads to the biosynthesis of aromatic amino acids. Catalyzes the reversible NADPH linked reduction of 3-dehydroshikimate (DHSA) to yield shikimate (SA). This chain is Shikimate dehydrogenase (NADP(+)), found in Nitrobacter winogradskyi (strain ATCC 25391 / DSM 10237 / CIP 104748 / NCIMB 11846 / Nb-255).